The sequence spans 448 residues: ATP-dependent protease ATPase subunit HslU (448 aa).

ATP is bound by residues I23, G65 to E70, D263, E327, and R399.

Belongs to the ClpX chaperone family. HslU subfamily. A double ring-shaped homohexamer of HslV is capped on each side by a ring-shaped HslU homohexamer. The assembly of the HslU/HslV complex is dependent on binding of ATP.

The protein resides in the cytoplasm. ATPase subunit of a proteasome-like degradation complex; this subunit has chaperone activity. The binding of ATP and its subsequent hydrolysis by HslU are essential for unfolding of protein substrates subsequently hydrolyzed by HslV. HslU recognizes the N-terminal part of its protein substrates and unfolds these before they are guided to HslV for hydrolysis. The chain is ATP-dependent protease ATPase subunit HslU from Borreliella burgdorferi (strain ATCC 35210 / DSM 4680 / CIP 102532 / B31) (Borrelia burgdorferi).